The following is a 1063-amino-acid chain: Lysine-specific demethylase phf2 (1063 aa).

The PHD-type zinc finger occupies 5–56 (PVYCICRLPYDVTQFMIECDACKDWFHGSCVGVDEDEAPDIDIYHCPNCEKT). The JmjC domain maps to 197–353 (FSDARMANIV…MQMRAYEVEK (157 aa)). Position 246 (Thr-246) interacts with 2-oxoglutarate. Fe cation is bound by residues His-249 and Glu-251. 2-oxoglutarate contacts are provided by Tyr-259 and Lys-266. Residue Asn-321 coordinates Fe cation. Disordered regions lie at residues 448–546 (VSDS…LAAL), 704–761 (NIKE…SAGI), 773–864 (GIDY…DMFD), and 879–1045 (YVYP…MATA). Positions 460 to 477 (SEPSNSKPPAEEPPSALS) are enriched in low complexity. Composition is skewed to basic and acidic residues over residues 513–540 (PPKEPKIKEGGKKKAKKVKEGVIPEKKP) and 723–745 (KSPDTSDEESLHIDTEAKTDVKG). The segment covering 746-755 (RNSKVSKKKG) has biased composition (basic residues). Residues 776 to 791 (YSNNSQPPASPSTQEA) are compositionally biased toward polar residues. The span at 813–833 (SNSQAKNNSHSSAASKKPSGA) shows a compositional bias: low complexity. Residues 842 to 852 (RPAKRLPKKTQ) are compositionally biased toward basic residues. Positions 920–929 (RQERPAREGA) are enriched in basic and acidic residues. Residues 953-964 (IKKKKKSAKKKP) are compositionally biased toward basic residues. The segment covering 965–975 (IVAEESHKLSH) has biased composition (basic and acidic residues). 2 stretches are compositionally biased toward low complexity: residues 976-988 (DSSSPEPTPDSES) and 1021-1031 (SSSSSSQNASS). Ser-1021 is subject to Phosphoserine; by PKA.

This sequence belongs to the JHDM1 histone demethylase family. JHDM1D subfamily.

It is found in the nucleus. The protein localises to the nucleolus. Its subcellular location is the chromosome. The protein resides in the centromere. It localises to the kinetochore. Its function is as follows. Lysine demethylase that demethylates both histones and non-histone proteins. Mediates demethylation of dimethylated 'Lys-9' of histone H3 (H3K9me2). Recruited to trimethylated 'Lys-4' of histone H3 (H3K4me3) at rDNA promoters and promotes expression of rDNA. The protein is Lysine-specific demethylase phf2 (phf2) of Danio rerio (Zebrafish).